A 393-amino-acid polypeptide reads, in one-letter code: Serine/threonine protein kinase AFUB_078980 (393 aa).

Positions 61-390 (YQVLSKLGFG…APELLTDPWL (330 aa)) constitute a Protein kinase domain. ATP is bound by residues 67–75 (LGFGANSTV) and Lys-90. Asp-190 acts as the Proton acceptor in catalysis.

This sequence belongs to the protein kinase superfamily. CMGC Ser/Thr protein kinase family.

The enzyme catalyses L-seryl-[protein] + ATP = O-phospho-L-seryl-[protein] + ADP + H(+). It catalyses the reaction L-threonyl-[protein] + ATP = O-phospho-L-threonyl-[protein] + ADP + H(+). In terms of biological role, serine/threonine protein kinase; part of the subtelomeric hrmA-associated cluster (HAC) containing genes that alter the hyphal surface (such as reduced total chitin or increased beta-glucan exposure) and perturb inter-hyphal interactions within the developing biofilms, resulting in a loss of vertically aligned polarized growing filaments. Consequently, this hypoxia-typic morphotype (called H-MORPH) with altered biofilm architecture leads to increased hypoxia fitness, increased host inflammation, rapid disease progression, and mortality in a murine model of invasive aspergillosis. This chain is Serine/threonine protein kinase AFUB_078980, found in Aspergillus fumigatus (strain CBS 144.89 / FGSC A1163 / CEA10) (Neosartorya fumigata).